Here is a 60-residue protein sequence, read N- to C-terminus: Large ribosomal subunit protein uL30 (60 aa).

Belongs to the universal ribosomal protein uL30 family. In terms of assembly, part of the 50S ribosomal subunit.

In Lactiplantibacillus plantarum (strain ATCC BAA-793 / NCIMB 8826 / WCFS1) (Lactobacillus plantarum), this protein is Large ribosomal subunit protein uL30.